A 392-amino-acid chain; its full sequence is 8-amino-7-oxononanoate synthase (392 aa).

108-109 (GF) lines the pyridoxal 5'-phosphate pocket. Residue His-133 coordinates substrate. Pyridoxal 5'-phosphate is bound by residues Ser-180, 205 to 208 (DDAH), and 236 to 239 (TLSK). Residue Lys-239 is modified to N6-(pyridoxal phosphate)lysine. Thr-353 lines the substrate pocket.

It belongs to the class-II pyridoxal-phosphate-dependent aminotransferase family. BioF subfamily. Homodimer. The cofactor is pyridoxal 5'-phosphate.

It catalyses the reaction 6-carboxyhexanoyl-[ACP] + L-alanine + H(+) = (8S)-8-amino-7-oxononanoate + holo-[ACP] + CO2. Its pathway is cofactor biosynthesis; biotin biosynthesis. In terms of biological role, catalyzes the decarboxylative condensation of pimeloyl-[acyl-carrier protein] and L-alanine to produce 8-amino-7-oxononanoate (AON), [acyl-carrier protein], and carbon dioxide. The chain is 8-amino-7-oxononanoate synthase from Bacillus pumilus (strain SAFR-032).